The chain runs to 115 residues: MARVKRGNIARKRRNKILNLAKGFRGGNKNLFRTANQRVMKALCNAYRDRRRRKRDFRRLWISRINASARINGTNYSKLINGMKNSEIIINRKMLAQLALSDPKCFEKIVSSVSN.

Belongs to the bacterial ribosomal protein bL20 family.

In terms of biological role, binds directly to 23S ribosomal RNA and is necessary for the in vitro assembly process of the 50S ribosomal subunit. It is not involved in the protein synthesizing functions of that subunit. This chain is Large ribosomal subunit protein bL20, found in Prochlorococcus marinus (strain MIT 9215).